The chain runs to 337 residues: Tetraacyldisaccharide 4'-kinase (337 aa).

55 to 62 (TAGGNGKT) lines the ATP pocket.

This sequence belongs to the LpxK family.

The enzyme catalyses a lipid A disaccharide + ATP = a lipid IVA + ADP + H(+). Its pathway is glycolipid biosynthesis; lipid IV(A) biosynthesis; lipid IV(A) from (3R)-3-hydroxytetradecanoyl-[acyl-carrier-protein] and UDP-N-acetyl-alpha-D-glucosamine: step 6/6. Functionally, transfers the gamma-phosphate of ATP to the 4'-position of a tetraacyldisaccharide 1-phosphate intermediate (termed DS-1-P) to form tetraacyldisaccharide 1,4'-bis-phosphate (lipid IVA). This Sodalis glossinidius (strain morsitans) protein is Tetraacyldisaccharide 4'-kinase.